We begin with the raw amino-acid sequence, 506 residues long: MALKRSSSMKTQLVDAIQLEEVEMEEEITTTSNNNNPVEPAQVKEPKCYTVEEAVESIGFGCFHILLFVIMGSANIVEAMEIMLLAVVSPEIRCEWHLEDWQVALVSTMVFFGFMVCGVLCGYIADKYGRWKVVFGGFVWASYFSFLTSFSTSYGWFIFLRCMVGCGVAATSQGFVLKTEFIPAKYRAYLLPLASIFWMMGSILIIVLGMTVVPTMGWRWMIRFSVIPSLVLIGLFMFIPESARFQVSAGNIQGAMSTLKRIAKMNNGVLPEGELREPEVTERGNAVTLISSAFRRTSLLLWYSWFVASFSYYGSVLSSSELLEKNLLCVTDPDLEHQIKHIQEETLCYCIPFNSDDYQTLLISCLGEVALIPLNIILLNIVGRKYSMVILLLLSAFFFMLVNICTTMLGFTILLFLLRSVVSMNFNVVYIYTAEVYPTSVRSIGMGFCTSFSRIGGMIAPFIAQVLMSKSVILALSPFATACIICAIGVFFLPIETRGRALLQDA.

A run of 10 helical transmembrane segments spans residues 57 to 77 (SIGF…ANIV), 104 to 124 (ALVS…CGYI), 133 to 153 (VVFG…FSTS), 190 to 210 (LLPL…VLGM), 220 to 240 (WMIR…MFIP), 297 to 317 (TSLL…GSVL), 362 to 382 (LISC…LNIV), 397 to 417 (FFFM…LLFL), 444 to 464 (IGMG…PFIA), and 472 to 492 (VILA…GVFF).

This sequence belongs to the major facilitator superfamily.

The protein resides in the membrane. In Danio rerio (Zebrafish), this protein is Putative transporter SVOPL (svopl).